The following is a 476-amino-acid chain: Zinc finger protein 563 (476 aa).

The KRAB domain maps to 4–96 (VAFEDVAVNF…IRDSIVNNSI (93 aa)). The C2H2-type 1; degenerate zinc-finger motif lies at 101–125 (DPCQSAECEEVIMGHLSLNSHIRVD). The C2H2-type 2; degenerate zinc-finger motif lies at 169–191 (YECKECGKTFSSRRNLRRHMVVQ). 10 C2H2-type zinc fingers span residues 197 to 219 (YKCKLCGKAFFWPSLLRMHERTH), 225 to 247 (YECKQCSKAFPFYSSYRRHERMH), 253 to 275 (YECKQCSKALPDSSSYIRHERTH), 281 to 303 (YTCKQCGKAFSVSSSLRRHETTH), 309 to 331 (YECKQCGKTFHHLGSFQIHMKRH), 337 to 359 (HKCKICGKGFDRPSLVRYHERIH), 365 to 387 (YECKQCGKTLSHSSSFRRHMIMH), 393 to 415 (HKCKICGKAFVYPSVCQRHEKSH), 421 to 443 (YECKQCGKALSHSSSFRRHMVMH), and 449 to 471 (NKCKVCGKAFVYPSVCQRHEKTH).

Belongs to the krueppel C2H2-type zinc-finger protein family.

It localises to the nucleus. In terms of biological role, may be involved in transcriptional regulation. The protein is Zinc finger protein 563 (ZNF563) of Homo sapiens (Human).